Consider the following 206-residue polypeptide: Glycerol-3-phosphate acyltransferase 1 (206 aa).

A run of 5 helical transmembrane segments spans residues 14–34, 67–87, 91–111, 124–144, and 148–168; these read IALA…GLIL, ATLL…SYFL, AAII…WIGF, LLGV…AVAF, and YSSL…WILG.

The protein belongs to the PlsY family. As to quaternary structure, probably interacts with PlsX.

It localises to the cell inner membrane. The catalysed reaction is an acyl phosphate + sn-glycerol 3-phosphate = a 1-acyl-sn-glycero-3-phosphate + phosphate. It functions in the pathway lipid metabolism; phospholipid metabolism. Catalyzes the transfer of an acyl group from acyl-phosphate (acyl-PO(4)) to glycerol-3-phosphate (G3P) to form lysophosphatidic acid (LPA). This enzyme utilizes acyl-phosphate as fatty acyl donor, but not acyl-CoA or acyl-ACP. The chain is Glycerol-3-phosphate acyltransferase 1 from Rhizobium johnstonii (strain DSM 114642 / LMG 32736 / 3841) (Rhizobium leguminosarum bv. viciae).